Reading from the N-terminus, the 78-residue chain is Translation initiation factor IF-1 (78 aa).

Residues 1-72 (MAKEAEMEFE…TRGRITYRKI (72 aa)) form the S1-like domain.

It belongs to the IF-1 family. In terms of assembly, component of the 30S ribosomal translation pre-initiation complex which assembles on the 30S ribosome in the order IF-2 and IF-3, IF-1 and N-formylmethionyl-tRNA(fMet); mRNA recruitment can occur at any time during PIC assembly.

It is found in the cytoplasm. Its function is as follows. One of the essential components for the initiation of protein synthesis. Stabilizes the binding of IF-2 and IF-3 on the 30S subunit to which N-formylmethionyl-tRNA(fMet) subsequently binds. Helps modulate mRNA selection, yielding the 30S pre-initiation complex (PIC). Upon addition of the 50S ribosomal subunit IF-1, IF-2 and IF-3 are released leaving the mature 70S translation initiation complex. The sequence is that of Translation initiation factor IF-1 from Mesoplasma florum (strain ATCC 33453 / NBRC 100688 / NCTC 11704 / L1) (Acholeplasma florum).